The following is a 152-amino-acid chain: Large-conductance mechanosensitive channel (152 aa).

2 helical membrane passes run 14-34 and 81-101; these read VIDLAIGVVIGGAFGKIVTSL and GLFLNNLINFLIIAFSIFIVI.

This sequence belongs to the MscL family. Homopentamer.

The protein localises to the cell membrane. Channel that opens in response to stretch forces in the membrane lipid bilayer. May participate in the regulation of osmotic pressure changes within the cell. This Clostridium perfringens (strain ATCC 13124 / DSM 756 / JCM 1290 / NCIMB 6125 / NCTC 8237 / Type A) protein is Large-conductance mechanosensitive channel.